Consider the following 238-residue polypeptide: tRNA (guanine-N(7)-)-methyltransferase (238 aa).

4 residues coordinate S-adenosyl-L-methionine: Glu68, Glu93, Asp120, and Asp143. Asp143 is a catalytic residue. Substrate-binding positions include Lys147, Asp179, and 216–219 (TKFE).

It belongs to the class I-like SAM-binding methyltransferase superfamily. TrmB family.

The catalysed reaction is guanosine(46) in tRNA + S-adenosyl-L-methionine = N(7)-methylguanosine(46) in tRNA + S-adenosyl-L-homocysteine. It participates in tRNA modification; N(7)-methylguanine-tRNA biosynthesis. Catalyzes the formation of N(7)-methylguanine at position 46 (m7G46) in tRNA. The protein is tRNA (guanine-N(7)-)-methyltransferase of Shewanella sp. (strain MR-4).